A 306-amino-acid chain; its full sequence is Glutaminase (306 aa).

Residues Ser-61, Asn-111, Glu-155, Asn-162, Tyr-186, Tyr-238, and Val-256 each coordinate substrate.

This sequence belongs to the glutaminase family. Homotetramer.

The catalysed reaction is L-glutamine + H2O = L-glutamate + NH4(+). This chain is Glutaminase, found in Pseudomonas entomophila (strain L48).